The following is a 362-amino-acid chain: ATP synthase F(1) complex catalytic subunit beta, mitochondrial (362 aa).

Lys14 is modified (N6-acetyllysine; alternate). Lys14 bears the N6-succinyllysine; alternate mark. Lys51 is modified (N6-acetyllysine). Positions 62, 63, 64, 65, 66, and 67 each coordinate ADP. Val62 is an ATP binding site. Val62, Val63, Gly64, Lys65, and Thr66 together coordinate phosphate. Positions 64, 65, 66, and 67 each coordinate ATP. Thr66 contacts Mg(2+). Position 91 (Glu91) interacts with Mg(2+). N6-acetyllysine; alternate is present on residues Lys112 and Lys117. Residues Lys112 and Lys117 each carry the N6-succinyllysine; alternate modification. At Thr165 the chain carries Phosphothreonine. The residue at position 279 (Lys279) is an N6-acetyllysine. Ser286 carries the post-translational modification Phosphoserine. N6-acetyllysine occurs at positions 333 and 338.

It belongs to the ATPase alpha/beta chains family. In terms of assembly, homotrimer. Component of the ATP synthase complex composed at least of ATP5F1A/subunit alpha, ATP5F1B/subunit beta, ATP5MC1/subunit c (homooctomer), MT-ATP6/subunit a, MT-ATP8/subunit 8, ATP5ME/subunit e, ATP5MF/subunit f, ATP5MG/subunit g, ATP5MK/subunit k, ATP5MJ/subunit j, ATP5F1C/subunit gamma, ATP5F1D/subunit delta, ATP5F1E/subunit epsilon, ATP5PF/subunit F6, ATP5PB/subunit b, ATP5PD/subunit d, ATP5PO/subunit OSCP. ATP synthase complex consists of a soluble F(1) head domain (subunits alpha(3) and beta(3)) - the catalytic core - and a membrane F(0) domain - the membrane proton channel (subunits c, a, 8, e, f, g, k and j). These two domains are linked by a central stalk (subunits gamma, delta, and epsilon) rotating inside the F1 region and a stationary peripheral stalk (subunits F6, b, d, and OSCP). Interacts with PPIF. Interacts with BCL2L1 isoform BCL-X(L); the interaction mediates the association of BCL2L1 isoform BCL-X(L) with the mitochondrial membrane F(1)F(0) ATP synthase and enhances neurons metabolic efficiency. Interacts with CLN5 and PPT1. Interacts with S100A1; this interaction increases F1-ATPase activity. Interacts with MTLN. Interacts with TTC5/STRAP; the interaction results in decreased mitochondrial ATP production.

Its subcellular location is the mitochondrion inner membrane. The enzyme catalyses ATP + H2O + 4 H(+)(in) = ADP + phosphate + 5 H(+)(out). Its function is as follows. Catalytic subunit beta, of the mitochondrial membrane ATP synthase complex (F(1)F(0) ATP synthase or Complex V) that produces ATP from ADP in the presence of a proton gradient across the membrane which is generated by electron transport complexes of the respiratory chain. ATP synthase complex consist of a soluble F(1) head domain - the catalytic core - and a membrane F(1) domain - the membrane proton channel. These two domains are linked by a central stalk rotating inside the F(1) region and a stationary peripheral stalk. During catalysis, ATP synthesis in the catalytic domain of F(1) is coupled via a rotary mechanism of the central stalk subunits to proton translocation. In vivo, can only synthesize ATP although its ATP hydrolase activity can be activated artificially in vitro. With the subunit alpha (ATP5F1A), forms the catalytic core in the F(1) domain. The sequence is that of ATP synthase F(1) complex catalytic subunit beta, mitochondrial from Mesocricetus auratus (Golden hamster).